The sequence spans 296 residues: Nucleotide-binding protein SAG0531 (296 aa).

Residue 13–20 (GMSGAGKT) participates in ATP binding. 63–66 (DMRS) contacts GTP.

It belongs to the RapZ-like family.

Displays ATPase and GTPase activities. The chain is Nucleotide-binding protein SAG0531 from Streptococcus agalactiae serotype V (strain ATCC BAA-611 / 2603 V/R).